The primary structure comprises 868 residues: DNA mismatch repair protein MutS (868 aa).

G623–S630 is an ATP binding site.

Belongs to the DNA mismatch repair MutS family.

Its function is as follows. This protein is involved in the repair of mismatches in DNA. It is possible that it carries out the mismatch recognition step. This protein has a weak ATPase activity. In Magnetococcus marinus (strain ATCC BAA-1437 / JCM 17883 / MC-1), this protein is DNA mismatch repair protein MutS.